The primary structure comprises 419 residues: Circumsporozoite protein (419 aa).

Positions 1–23 (MKNFNLLAVSSILLVDLFRTHWG) are cleaved as a signal peptide. The interval 50–111 (AQVRQSASRG…GNAGGNAGGN (62 aa)) is disordered. Positions 65–95 (NPKEEDGADKKKKKDEKQVEPKKPRENKLKQ) are enriched in basic and acidic residues. The segment at 81–89 (KQVEPKKPR) is required for the binding to heparan sulfate proteoglycans (HSPGs) on the surface of host hepatocytes. The interval 92–96 (KLKQP) is region I; contains the proteolytic cleavage site. Repeat copies occupy residues 99–102 (NADG), 103–106 (NAGG), 107–110 (NAGG), 111–114 (NAGG), 115–118 (NAGG), 119–122 (NAGG), 123–126 (NADG), 127–130 (NAGG), 131–134 (NAGG), 135–138 (NAGG), 139–142 (NAGG), 143–146 (NAGG), 147–150 (NADG), 151–154 (NAGG), 155–158 (NADG), 159–162 (NAGG), 163–166 (NADG), 167–170 (NAGG), 171–174 (NAGG), 175–178 (NAGG), 179–182 (NADG), 183–186 (NAGG), 187–190 (NAGG), 191–194 (NAGG), 195–198 (NAGG), 199–202 (NAGG), 203–206 (NAGG), 207–210 (NAGG), 211–214 (NADG), 215–218 (NAGG), 219–222 (NAGG), 223–226 (NAGG), 227–230 (NADG), 231–234 (NAGG), 235–238 (NAGG), 239–242 (NAGG), 243–246 (NAGG), and 247–250 (NAGG). The tract at residues 99 to 314 (NADGNAGGNA…GGNAGANAGN (216 aa)) is 54 X 4 AA approximate tandem repeats of N-A-G-G. Residues 146–237 (GNADGNAGGN…ADGNAGGNAG (92 aa)) are disordered. A 39; approximate repeat occupies 251 to 254 (TAGG). 13 consecutive repeat copies span residues 255–258 (NADG), 259–262 (NAGG), 263–266 (NAGG), 267–270 (NAGG), 271–274 (NAGG), 275–278 (NAGG), 279–282 (NAGG), 283–286 (NAGG), 287–290 (NAGG), 291–294 (NAGG), 295–298 (NAGG), 299–302 (NAGG), and 303–306 (NAGG). A 53; approximate repeat occupies 307 to 310 (NAGA). A 54; approximate repeat occupies 311 to 314 (NAGN). A disordered region spans residues 312–332 (AGNKKAGDAGAGQGQNNEAAN). In terms of domain architecture, TSP type-1 spans 345–397 (KIRSTISTEWSPCSVTCGKGVRMRKKVSAANKKPEELDVNDLETEVCTMDKCA). 2 cysteine pairs are disulfide-bonded: Cys357-Cys391 and Cys361-Cys396. Residue Thr360 is glycosylated (O-linked (Fuc) threonine). Cys396 is lipidated: GPI-anchor amidated cysteine. Residues 397–419 (AGIFNVVSNSLRLVILLVLALFN) constitute a propeptide, removed in mature form.

The protein belongs to the plasmodium circumsporozoite protein family. During host cell invasion, proteolytically cleaved at the cell membrane in the region I by a papain-like cysteine protease of parasite origin. Cleavage is triggered by the sporozoite contact with highly sulfated heparan sulfate proteoglycans (HSPGs) present on the host hepatocyte cell surface. Cleavage exposes the TSP type-1 (TSR) domain and is required for productive invasion of host hepatocytes but not for adhesion to the host cell membrane. Cleavage is dispensable for sporozoite development in the oocyst, motility and for traversal of host and vector cells. Post-translationally, O-glycosylated; maybe by POFUT2.

Its subcellular location is the cell membrane. The protein localises to the cytoplasm. Its function is as follows. Essential sporozoite protein. In the mosquito vector, required for sporozoite development in the oocyst, migration through the vector hemolymph and entry into the vector salivary glands. In the vertebrate host, required for sporozoite migration through the host dermis and infection of host hepatocytes. Binds to highly sulfated heparan sulfate proteoglycans (HSPGs) on the surface of host hepatocytes. In the vertebrate host, binds to highly sulfated heparan sulfate proteoglycans (HSPGs) on the surface of host hepatocytes and is required for sporozoite invasion of the host hepatocytes. The sequence is that of Circumsporozoite protein from Plasmodium cynomolgi (strain Mulligan/NIH).